The sequence spans 208 residues: Putative thymidylate kinase (208 aa).

Residues 12 to 19 (GIDGTGTS) form a defective ATP-binding region.

Belongs to the thymidylate kinase family.

The catalysed reaction is dTMP + ATP = dTDP + ADP. The polypeptide is Putative thymidylate kinase (tmk) (Treponema pallidum (strain Nichols)).